The sequence spans 391 residues: Chaperone protein DnaJ (391 aa).

The region spanning 6 to 71 (CYYEVLKVER…NKRARYDQYG (66 aa)) is the J domain. A CR-type zinc finger spans residues 137–215 (GCHKDIVFRR…CRGTGTQNEK (79 aa)). Zn(2+) contacts are provided by C150, C153, C167, C170, C189, C192, C203, and C206. 4 CXXCXGXG motif repeats span residues 150-157 (CDTCDGSG), 167-174 (CTMCGGQG), 189-196 (CPTCKGAG), and 203-210 (CGKCRGTG). The disordered stretch occupies residues 372–391 (FFDPEPEEAGTGSTDTEKDS).

Belongs to the DnaJ family. Homodimer. The cofactor is Zn(2+).

The protein localises to the cytoplasm. Its function is as follows. Participates actively in the response to hyperosmotic and heat shock by preventing the aggregation of stress-denatured proteins and by disaggregating proteins, also in an autonomous, DnaK-independent fashion. Unfolded proteins bind initially to DnaJ; upon interaction with the DnaJ-bound protein, DnaK hydrolyzes its bound ATP, resulting in the formation of a stable complex. GrpE releases ADP from DnaK; ATP binding to DnaK triggers the release of the substrate protein, thus completing the reaction cycle. Several rounds of ATP-dependent interactions between DnaJ, DnaK and GrpE are required for fully efficient folding. Also involved, together with DnaK and GrpE, in the DNA replication of plasmids through activation of initiation proteins. The chain is Chaperone protein DnaJ from Rhodopirellula baltica (strain DSM 10527 / NCIMB 13988 / SH1).